The sequence spans 358 residues: 3-isopropylmalate dehydrogenase (358 aa).

Residues Arg92, Arg102, Arg130, and Asp224 each coordinate substrate. Positions 224, 248, and 252 each coordinate Mg(2+). Residue 282 to 294 participates in NAD(+) binding; sequence GSAPDIAGQGIAN.

This sequence belongs to the isocitrate and isopropylmalate dehydrogenases family. LeuB type 1 subfamily. Homodimer. Requires Mg(2+) as cofactor. Mn(2+) is required as a cofactor.

It is found in the cytoplasm. It catalyses the reaction (2R,3S)-3-isopropylmalate + NAD(+) = 4-methyl-2-oxopentanoate + CO2 + NADH. The protein operates within amino-acid biosynthesis; L-leucine biosynthesis; L-leucine from 3-methyl-2-oxobutanoate: step 3/4. In terms of biological role, catalyzes the oxidation of 3-carboxy-2-hydroxy-4-methylpentanoate (3-isopropylmalate) to 3-carboxy-4-methyl-2-oxopentanoate. The product decarboxylates to 4-methyl-2 oxopentanoate. In Bordetella parapertussis (strain 12822 / ATCC BAA-587 / NCTC 13253), this protein is 3-isopropylmalate dehydrogenase.